The chain runs to 473 residues: Cell division protein FtsZ homolog 2-2, chloroplastic (473 aa).

GTP is bound by residues 124 to 128, 213 to 215, E244, and R248; these read GGGSN and GTG. At T282 the chain carries Phosphothreonine; by PGK1. A GTP-binding site is contributed by D292. The segment at 424 to 455 is disordered; the sequence is EEGEGRPLQATQADASMGATRRPSSSFTEGSS. The segment covering 445 to 454 has biased composition (polar residues); it reads RPSSSFTEGS.

This sequence belongs to the FtsZ family. Aggregates to form a contractile ring-like structure; contraction of the ring was accompanied by an increase in the filament turnover rate. Self-interacts and binds to FTSZ1 in heteropolymers to form two morphologically distinct types of filaments, termed type-I (smooth filaments) and -II (rough filaments), in a GTP-dependent manner. Part of a complex made of ARC3, ARC6, FTSZ1 and FTSZ2. Interacts (via C-terminus) with ARC6. Interacts with CDP1/PARC6. Binds to PGK1. Phosphorylation at Thr-282 is required for the formation of contractile ring at the chloroplast midpoint.

The protein localises to the plastid. It is found in the chloroplast stroma. It localises to the chloroplast thylakoid membrane. In terms of biological role, exhibits GTPase activity. Component of the plastid division machinery that forms a contractile ring at the division site. Contributes to plastid division in the vegetative shoot apex, at the shoot apical meristem (SAM) where the proplastid-to-chloroplast transition takes place. The polypeptide is Cell division protein FtsZ homolog 2-2, chloroplastic (Arabidopsis thaliana (Mouse-ear cress)).